Reading from the N-terminus, the 112-residue chain is MFGKAGIAGLMKQAQQMQENMKKAQEELAKVEVEGQSGAGMVKVTMTCSHDVKRVAIDDSVLEDAKEDKEMLEDLIAAAFNDAVRKVEATTQERMSGFTNGLNLPAGMKFPF.

It belongs to the YbaB/EbfC family. As to quaternary structure, homodimer.

Its subcellular location is the cytoplasm. It localises to the nucleoid. In terms of biological role, binds to DNA and alters its conformation. May be involved in regulation of gene expression, nucleoid organization and DNA protection. The protein is Nucleoid-associated protein CV_1611 of Chromobacterium violaceum (strain ATCC 12472 / DSM 30191 / JCM 1249 / CCUG 213 / NBRC 12614 / NCIMB 9131 / NCTC 9757 / MK).